The chain runs to 276 residues: Formamidopyrimidine-DNA glycosylase (276 aa).

Proline 2 acts as the Schiff-base intermediate with DNA in catalysis. Catalysis depends on glutamate 3, which acts as the Proton donor. Lysine 59 functions as the Proton donor; for beta-elimination activity in the catalytic mechanism. DNA contacts are provided by histidine 92, arginine 111, and lysine 155. The segment at 239-273 (AVYGQTGAPCPRCGTAIEKIKVGGRGTHFCPTCQQ) adopts an FPG-type zinc-finger fold. The Proton donor; for delta-elimination activity role is filled by arginine 263.

Belongs to the FPG family. As to quaternary structure, monomer. Zn(2+) serves as cofactor.

The catalysed reaction is Hydrolysis of DNA containing ring-opened 7-methylguanine residues, releasing 2,6-diamino-4-hydroxy-5-(N-methyl)formamidopyrimidine.. It catalyses the reaction 2'-deoxyribonucleotide-(2'-deoxyribose 5'-phosphate)-2'-deoxyribonucleotide-DNA = a 3'-end 2'-deoxyribonucleotide-(2,3-dehydro-2,3-deoxyribose 5'-phosphate)-DNA + a 5'-end 5'-phospho-2'-deoxyribonucleoside-DNA + H(+). Involved in base excision repair of DNA damaged by oxidation or by mutagenic agents. Acts as a DNA glycosylase that recognizes and removes damaged bases. Has a preference for oxidized purines, such as 7,8-dihydro-8-oxoguanine (8-oxoG). Has AP (apurinic/apyrimidinic) lyase activity and introduces nicks in the DNA strand. Cleaves the DNA backbone by beta-delta elimination to generate a single-strand break at the site of the removed base with both 3'- and 5'-phosphates. In Exiguobacterium sibiricum (strain DSM 17290 / CCUG 55495 / CIP 109462 / JCM 13490 / 255-15), this protein is Formamidopyrimidine-DNA glycosylase.